The chain runs to 671 residues: Probable potassium transport system protein Kup 2 (671 aa).

12 consecutive transmembrane segments (helical) span residues 18-38 (GFLIALGIVYGDIGTSPLYAM), 60-80 (VSLVIWTLTLITTVKYVLIAL), 103-123 (WLIIPAMIGGATLLADGALTP), 146-166 (AVMVTTLIILAFLFLIQRFGA), 173-193 (FGPIMFIWFGFLGVSGLINSF), 218-238 (AGFFILGSIFLVTTGAEALYS), 252-272 (WPFVKICIILSYCGQGAWLLA), 292-312 (MVIYVVILSTLAAIIASQALI), 343-363 (LYIPAVNFALWVTTSFFVLYF), 373-393 (YSLAITITMLMTTTLLTYFLI), 402-422 (IAIISIGLFCIEGSFFAASLV), and 424-444 (FINGAYIVVLIALAIIFVMFI).

It belongs to the HAK/KUP transporter (TC 2.A.72) family.

The protein localises to the cell membrane. The enzyme catalyses K(+)(in) + H(+)(in) = K(+)(out) + H(+)(out). Transport of potassium into the cell. Likely operates as a K(+):H(+) symporter. This Lactococcus lactis subsp. lactis (strain IL1403) (Streptococcus lactis) protein is Probable potassium transport system protein Kup 2.